The following is a 162-amino-acid chain: 2-C-methyl-D-erythritol 2,4-cyclodiphosphate synthase (162 aa).

Residues Asp-10 and His-12 each coordinate a divalent metal cation. 4-CDP-2-C-methyl-D-erythritol 2-phosphate contacts are provided by residues Asp-10 to His-12 and His-36 to Ser-37. His-44 contacts a divalent metal cation. 4-CDP-2-C-methyl-D-erythritol 2-phosphate contacts are provided by residues Asp-58–Gly-60, Phe-63–Asp-67, and Arg-144.

This sequence belongs to the IspF family. As to quaternary structure, homotrimer. A divalent metal cation serves as cofactor.

It catalyses the reaction 4-CDP-2-C-methyl-D-erythritol 2-phosphate = 2-C-methyl-D-erythritol 2,4-cyclic diphosphate + CMP. The protein operates within isoprenoid biosynthesis; isopentenyl diphosphate biosynthesis via DXP pathway; isopentenyl diphosphate from 1-deoxy-D-xylulose 5-phosphate: step 4/6. In terms of biological role, involved in the biosynthesis of isopentenyl diphosphate (IPP) and dimethylallyl diphosphate (DMAPP), two major building blocks of isoprenoid compounds. Catalyzes the conversion of 4-diphosphocytidyl-2-C-methyl-D-erythritol 2-phosphate (CDP-ME2P) to 2-C-methyl-D-erythritol 2,4-cyclodiphosphate (ME-CPP) with a corresponding release of cytidine 5-monophosphate (CMP). This Laribacter hongkongensis (strain HLHK9) protein is 2-C-methyl-D-erythritol 2,4-cyclodiphosphate synthase.